A 298-amino-acid chain; its full sequence is Diphthine methyl ester synthase (298 aa).

S-adenosyl-L-methionine is bound by residues leucine 9, aspartate 85, glycine 88, serine 113–valine 114, leucine 164, leucine 222, and histidine 247.

The protein belongs to the diphthine synthase family.

The protein localises to the cytoplasm. It catalyses the reaction 2-[(3S)-amino-3-carboxypropyl]-L-histidyl-[translation elongation factor 2] + 4 S-adenosyl-L-methionine = diphthine methyl ester-[translation elongation factor 2] + 4 S-adenosyl-L-homocysteine + 3 H(+). Its pathway is protein modification; peptidyl-diphthamide biosynthesis. Its function is as follows. S-adenosyl-L-methionine-dependent methyltransferase that catalyzes four methylations of the modified target histidine residue in translation elongation factor 2 (EF-2), to form an intermediate called diphthine methyl ester. The four successive methylation reactions represent the second step of diphthamide biosynthesis. The sequence is that of Diphthine methyl ester synthase (DPH5) from Candida glabrata (strain ATCC 2001 / BCRC 20586 / JCM 3761 / NBRC 0622 / NRRL Y-65 / CBS 138) (Yeast).